A 280-amino-acid polypeptide reads, in one-letter code: P32 adhesin (280 aa).

The next 2 membrane-spanning stretches (helical) occupy residues 13 to 37 (FIVLALLFTTILIVSLSLLAFALVV) and 68 to 92 (WFIPTVAGSFGFSALAIILGLAIGL). The segment covering 114-128 (EQLQRISDQQEQQTV) has biased composition (polar residues). 2 disordered regions span residues 114-149 (EQLQRISDQQEQQTVEIDPQQSQAQPSQPQVQQPLQ) and 163-280 (FNPN…GLKP). 2 stretches are compositionally biased toward low complexity: residues 132-149 (PQQSQAQPSQPQVQQPLQ) and 168-188 (QQRPGFNQPNQQFQPHNNFNP). 13 repeat units span residues 163–168 (FNPNMQ), 170–174 (RPGFN), 186–190 (FNPRM), 191–195 (NPNMQ), 196–200 (RPGFN), 199–204 (FNPNMQ), 206–210 (RPGFN), 222–226 (FNPRM), 227–231 (NPNMQ), 232–236 (RPGFN), 249–254 (FNPNMQ), 256–260 (RPGFN), and 259–264 (FNPNMQ). A 6 X 5 AA repeats of [FM]-N-P-N-M-Q region spans residues 163-264 (FNPNMQQRPG…QRPGFNPNMQ (102 aa)). The segment at 170–260 (RPGFNQPNQQ…PNMQQRPGFN (91 aa)) is 5 X 5 AA repeats of R-P-G-F-N. Positions 186–226 (FNPRMNPNMQRPGFNPNMQQRPGFNQPNQQFQPHNNFNPRM) are 2 X 5 AA repeats of F-N-P-R-M. A compositionally biased stretch (low complexity) spans 204–224 (QQRPGFNQPNQQFQPHNNFNP). Low complexity predominate over residues 235-257 (FNQPHPNQFAQPNNFNPNMQQRP). Residues 261 to 271 (PNMQQRPNPSQ) are compositionally biased toward polar residues.

Its subcellular location is the cell projection. The protein resides in the attachment organelle membrane. Functionally, adhesin necessary for successful cytadherence and virulence. The sequence is that of P32 adhesin from Mycoplasma genitalium (strain ATCC 33530 / DSM 19775 / NCTC 10195 / G37) (Mycoplasmoides genitalium).